The chain runs to 300 residues: MTTEHKSGFVAIVGRPNVGKSTLLNRIVGQKIAIMSDKAQTTRNKIQGIYTIPEAQIVFIDTPGIHKPKHRLGDFMVESAYNAMREVDATLFMVSADQKRGKGDDFIIERLKNNNSPVYLIINKIDKVHPDDLLSIIEDYSKQMDFKEIIPISATEGNNFEHLMDVLVEQMPEGPQYFPDDQITDHPEYFIVSELIREKVLLLTRDEIPHSVAVVVDSMKRDENDKVHVQATIIVERDSQKGIIIGKGGKMLKQIGTKARQDIEYLLDDKVYLELWVKVQKDWRDKKIYLQDFGYRKEEY.

Residues 6–173 (KSGFVAIVGR…MDVLVEQMPE (168 aa)) form the Era-type G domain. Positions 14–21 (GRPNVGKS) are G1. 14–21 (GRPNVGKS) contacts GTP. Positions 40-44 (QTTRN) are G2. The interval 61-64 (DTPG) is G3. Residues 61-65 (DTPGI) and 123-126 (NKID) each bind GTP. The segment at 123–126 (NKID) is G4. The interval 152–154 (ISA) is G5. A KH type-2 domain is found at 204–281 (TRDEIPHSVA…YLELWVKVQK (78 aa)).

The protein belongs to the TRAFAC class TrmE-Era-EngA-EngB-Septin-like GTPase superfamily. Era GTPase family. In terms of assembly, monomer.

It is found in the cytoplasm. It localises to the cell membrane. Functionally, an essential GTPase that binds both GDP and GTP, with rapid nucleotide exchange. Plays a role in 16S rRNA processing and 30S ribosomal subunit biogenesis and possibly also in cell cycle regulation and energy metabolism. This Enterococcus faecalis (strain ATCC 700802 / V583) protein is GTPase Era.